The chain runs to 498 residues: MASQGTKRSYEQMETDGERQNANEIRASVGKMIGGIGRFYIQMCTELKLSDYEGRLIQNSLTIERMVLSAFDERRNKYLEEHPSAGKDPKKTGGPIYKRVDGKWMRELVLYDKEEIRRIWRQANNGDDATAGLTHMMIWHSNLNDTTYQRTRALVRTGMDPRMCSLMQGSTLPRRSGAAGAAVKGVGTMVMELIRMIKRGINDRNFWRGENGRKTRNAYERMCNILKGKFQTAAQRAMMDQVRESRNPGNAEIEDLIFLARSALILRGSVAHKSCLPACVYGPAVASGYDFEKEGYSLVGIDPFKLLQNSQVYSLIRPNENPAHKSQLVWMACNSAAFEDLRVSSFIRGTKVIPRGKLSTRGVQIASNENMDTMGSSTLELRSRYWAIRTRSGGNTNQQRASAGQISVQPTFSVQRNLPFDKPTIMAAFTGNAEGRTSDMRAEIIRMMEGAKPEEVSFQGRGVFELSDEKATNPIVPSFDMSNEGSYFFGDNAEEYDN.

Positions 1 to 18 (MASQGTKRSYEQMETDGE) match the Unconventional nuclear localization signal motif. The tract at residues 1 to 22 (MASQGTKRSYEQMETDGERQNA) is disordered. Residues 8–21 (RSYEQMETDGERQN) show a composition bias toward basic and acidic residues. The Bipartite nuclear localization signal signature appears at 198 to 216 (KRGINDRNFWRGENGRKTR).

Belongs to the influenza viruses nucleoprotein family. As to quaternary structure, homomultimerizes to form the nucleocapsid. May bind host exportin-1/XPO1. Binds to viral genomic RNA. Protein-RNA contacts are mediated by a combination of electrostatic interactions between positively charged residues and the phosphate backbone and planar interactions between aromatic side chains and bases. Late in virus-infected cells, may be cleaved from a 56-kDa protein to a 53-kDa protein by a cellular caspase. This cleavage might be a marker for the onset of apoptosis in infected cells or have a specific function in virus host interaction.

Its subcellular location is the virion. It localises to the host nucleus. Functionally, encapsidates the negative strand viral RNA, protecting it from nucleases. The encapsidated genomic RNA is termed the ribonucleoprotein (RNP) and serves as template for transcription and replication. The RNP needs to be localized in the host nucleus to start an infectious cycle, but is too large to diffuse through the nuclear pore complex. NP comprises at least 2 nuclear localization signals that are responsible for the active RNP import into the nucleus through cellular importin alpha/beta pathway. Later in the infection, nclear export of RNPs are mediated through viral proteins NEP interacting with M1 which binds nucleoproteins. It is possible that nucleoprotein binds directly host exportin-1/XPO1 and plays an active role in RNPs nuclear export. M1 interaction with RNP seems to hide nucleoprotein's nuclear localization signals. Soon after a virion infects a new cell, M1 dissociates from the RNP under acidification of the virion driven by M2 protein. Dissociation of M1 from RNP unmasks nucleoprotein's nuclear localization signals, targeting the RNP to the nucleus. This chain is Nucleoprotein, found in Influenza A virus (strain A/Ann Arbor/6/1960 H2N2).